A 215-amino-acid chain; its full sequence is Large ribosomal subunit protein eL15 (215 aa).

Residues 179–215 form a disordered region; it reads GTVKHKWKKKEKEREQKKRHEATKYYRLQNYDKLPGK. Residues 188–202 are compositionally biased toward basic and acidic residues; the sequence is KEKEREQKKRHEATK.

The protein belongs to the eukaryotic ribosomal protein eL15 family.

The chain is Large ribosomal subunit protein eL15 from Sulfurisphaera tokodaii (strain DSM 16993 / JCM 10545 / NBRC 100140 / 7) (Sulfolobus tokodaii).